The primary structure comprises 611 residues: Probable cysteine desulfurase 1 (611 aa).

The tract at residues 1 to 208 (MRATQLYAAS…HEMVDVFDIQ (208 aa)) is cargo-loading domain. N6-(pyridoxal phosphate)lysine is present on lysine 428. The active-site Cysteine persulfide intermediate is the cysteine 566.

It belongs to the class-V pyridoxal-phosphate-dependent aminotransferase family. Csd subfamily. There are 1-2 copies of this protein in each type 2A encapsulin shell. It depends on pyridoxal 5'-phosphate as a cofactor.

The protein localises to the encapsulin nanocompartment. It catalyses the reaction (sulfur carrier)-H + L-cysteine = (sulfur carrier)-SH + L-alanine. Cargo protein of a type 2A encapsulin nanocompartment involved in sulfur metabolism. Cysteine desulfurases mobilize the sulfur from L-cysteine to yield L-alanine, an essential step in sulfur metabolism for biosynthesis of a variety of sulfur-containing biomolecules. This Mycobacterium leprae (strain TN) protein is Probable cysteine desulfurase 1.